A 310-amino-acid chain; its full sequence is tRNA pseudouridine synthase B (310 aa).

The Nucleophile role is filled by aspartate 47.

The protein belongs to the pseudouridine synthase TruB family. Type 1 subfamily.

The catalysed reaction is uridine(55) in tRNA = pseudouridine(55) in tRNA. In terms of biological role, responsible for synthesis of pseudouridine from uracil-55 in the psi GC loop of transfer RNAs. This chain is tRNA pseudouridine synthase B, found in Caulobacter sp. (strain K31).